A 621-amino-acid chain; its full sequence is 1-deoxy-D-xylulose-5-phosphate synthase (621 aa).

Thiamine diphosphate-binding positions include His-80 and 121–123; that span reads GHS. Residue Asp-152 coordinates Mg(2+). Residues 153–154, Asn-181, Tyr-288, and Glu-370 contribute to the thiamine diphosphate site; that span reads GA. Asn-181 lines the Mg(2+) pocket.

It belongs to the transketolase family. DXPS subfamily. As to quaternary structure, homodimer. Requires Mg(2+) as cofactor. Thiamine diphosphate serves as cofactor.

The enzyme catalyses D-glyceraldehyde 3-phosphate + pyruvate + H(+) = 1-deoxy-D-xylulose 5-phosphate + CO2. The protein operates within metabolic intermediate biosynthesis; 1-deoxy-D-xylulose 5-phosphate biosynthesis; 1-deoxy-D-xylulose 5-phosphate from D-glyceraldehyde 3-phosphate and pyruvate: step 1/1. Catalyzes the acyloin condensation reaction between C atoms 2 and 3 of pyruvate and glyceraldehyde 3-phosphate to yield 1-deoxy-D-xylulose-5-phosphate (DXP). The protein is 1-deoxy-D-xylulose-5-phosphate synthase of Shewanella sediminis (strain HAW-EB3).